Here is a 272-residue protein sequence, read N- to C-terminus: DNA repair protein RecO (272 aa).

Belongs to the RecO family.

Involved in DNA repair and RecF pathway recombination. The sequence is that of DNA repair protein RecO from Limosilactobacillus fermentum (strain NBRC 3956 / LMG 18251) (Lactobacillus fermentum).